Here is a 328-residue protein sequence, read N- to C-terminus: Diaminopimelate epimerase (328 aa).

The substrate site is built by N14 and N73. Residue C82 is the Proton donor of the active site. Residues 83 to 84, N170, N206, and 224 to 225 each bind substrate; these read GN and ER. C233 functions as the Proton acceptor in the catalytic mechanism. 234–235 contributes to the substrate binding site; it reads GT.

Belongs to the diaminopimelate epimerase family. In terms of assembly, homodimer.

It is found in the cytoplasm. The catalysed reaction is (2S,6S)-2,6-diaminopimelate = meso-2,6-diaminopimelate. It participates in amino-acid biosynthesis; L-lysine biosynthesis via DAP pathway; DL-2,6-diaminopimelate from LL-2,6-diaminopimelate: step 1/1. Its function is as follows. Catalyzes the stereoinversion of LL-2,6-diaminopimelate (L,L-DAP) to meso-diaminopimelate (meso-DAP), a precursor of L-lysine and an essential component of the bacterial peptidoglycan. The chain is Diaminopimelate epimerase from Listeria welshimeri serovar 6b (strain ATCC 35897 / DSM 20650 / CCUG 15529 / CIP 8149 / NCTC 11857 / SLCC 5334 / V8).